The following is an 880-amino-acid chain: Xylosyltransferase oxt (880 aa).

The Cytoplasmic segment spans residues 1–14 (MEQSVSARWLRRYR). The helical; Signal-anchor for type II membrane protein transmembrane segment at 15 to 35 (PVLIILVLIFGIQLFLAYKSV) threads the bilayer. Topologically, residues 36–880 (DIGGGSGSGL…PKSDVDALLK (845 aa)) are lumenal. Disulfide bonds link C87-C115, C131-C469, C488-C501, and C490-C499. N-linked (GlcNAc...) asparagine glycans are attached at residues N135 and N139. One can recognise a WSC domain in the interval 138 to 232 (ANVSLGCYRD…FYAMNIYETG (95 aa)). UDP-alpha-D-xylose contacts are provided by residues D287 and 316 to 318 (TIW). A glycan (N-linked (GlcNAc...) asparagine) is linked at N346. 419 to 420 (DW) is a UDP-alpha-D-xylose binding site. UDP-alpha-D-xylose contacts are provided by residues S502 and 526–527 (RK). N700 and N729 each carry an N-linked (GlcNAc...) asparagine glycan. A disulfide bridge connects residues C846 and C859.

The protein belongs to the glycosyltransferase 14 family. XylT subfamily. Ca(2+) serves as cofactor. It depends on Mn(2+) as a cofactor. Mg(2+) is required as a cofactor.

The protein localises to the endoplasmic reticulum membrane. The protein resides in the golgi apparatus membrane. The enzyme catalyses UDP-alpha-D-xylose + L-seryl-[protein] = 3-O-(beta-D-xylosyl)-L-seryl-[protein] + UDP + H(+). It participates in glycan metabolism; chondroitin sulfate biosynthesis. The protein operates within glycan metabolism; heparan sulfate biosynthesis. Functionally, catalyzes the first step in biosynthesis of glycosaminoglycan. Transfers D-xylose from UDP-D-xylose to specific serine residues of the core protein. This Drosophila pseudoobscura pseudoobscura (Fruit fly) protein is Xylosyltransferase oxt.